A 403-amino-acid chain; its full sequence is S-adenosylmethionine synthase (403 aa).

Histidine 16 is an ATP binding site. Mg(2+) is bound at residue aspartate 18. Glutamate 44 lines the K(+) pocket. L-methionine is bound by residues glutamate 57 and glutamine 100. The flexible loop stretch occupies residues 100–110 (QSSDIAQGVDR). ATP-binding positions include 165–167 (DAK), aspartate 242, 248–249 (RK), alanine 265, and lysine 269. Aspartate 242 provides a ligand contact to L-methionine. Residue lysine 273 participates in L-methionine binding.

The protein belongs to the AdoMet synthase family. As to quaternary structure, homotetramer; dimer of dimers. The cofactor is Mg(2+). K(+) is required as a cofactor.

The protein resides in the cytoplasm. The enzyme catalyses L-methionine + ATP + H2O = S-adenosyl-L-methionine + phosphate + diphosphate. It participates in amino-acid biosynthesis; S-adenosyl-L-methionine biosynthesis; S-adenosyl-L-methionine from L-methionine: step 1/1. In terms of biological role, catalyzes the formation of S-adenosylmethionine (AdoMet) from methionine and ATP. The overall synthetic reaction is composed of two sequential steps, AdoMet formation and the subsequent tripolyphosphate hydrolysis which occurs prior to release of AdoMet from the enzyme. This is S-adenosylmethionine synthase from Nitrosococcus oceani (strain ATCC 19707 / BCRC 17464 / JCM 30415 / NCIMB 11848 / C-107).